The sequence spans 555 residues: Phosphoglucomutase (555 aa).

The alpha-D-glucose 1,6-bisphosphate site is built by Arg22 and Ser114. Ser114 functions as the Phosphoserine intermediate in the catalytic mechanism. Mg(2+) is bound by residues Ser114, Asp279, Asp281, and Asp283. Phosphoserine is present on Ser114. Alpha-D-glucose 1,6-bisphosphate is bound by residues Asp283, Arg284, Thr347, Glu366, Ser368, and Lys379.

This sequence belongs to the phosphohexose mutase family. Monomer. Mg(2+) serves as cofactor.

It localises to the cytoplasm. It carries out the reaction alpha-D-glucose 1-phosphate = alpha-D-glucose 6-phosphate. The catalysed reaction is O-phospho-L-seryl-[protein] + alpha-D-glucose 1-phosphate = alpha-D-glucose 1,6-bisphosphate + L-seryl-[protein]. The enzyme catalyses alpha-D-glucose 1,6-bisphosphate + L-seryl-[protein] = O-phospho-L-seryl-[protein] + alpha-D-glucose 6-phosphate. In terms of biological role, catalyzes the reversible isomerization of alpha-D-glucose 1-phosphate to alpha-D-glucose 6-phosphate. The mechanism proceeds via the intermediate compound alpha-D-glucose 1,6-bisphosphate. Key enzyme in hexose metabolism. The reverse reaction is an essential step for biosynthesis because glucose 1-phosphate is the starting point for the synthesis of UDP-glucose, which acts as a precursor for the synthesis of oligosaccharides and trehalose. This chain is Phosphoglucomutase (pgmA), found in Aspergillus fumigatus (strain ATCC MYA-4609 / CBS 101355 / FGSC A1100 / Af293) (Neosartorya fumigata).